Reading from the N-terminus, the 466-residue chain is MLYGKENRDEAEFLEPIFGSESEQVDLPKYKLAQQSIEPRVAYQLVQDEMLDEGNARLNLATFCQTYMEPEAVKLMSQTLEKNAIDKSEYPRTTEIENRCVNMIADLWNASEKEKFMGTSTIGSSEACMLGGMAMKFSWRKRAEKLGLDINAKKPNLVISSGYQVCWEKFCVYWDIEMREVPMDREHMSINLEKVMDYVDEYTIGVVGIMGITYTGRYDDIKALDNLIEEYNKQTDYKVYIHVDAASGGLYAPFVEPELEWDFRLKNVISINTSGHKYGLVYPGVGWVLWRDKKYLPEELIFKVSYLGGELPTMAINFSHSASQLIGQYYNFVRYGFDGYKAIHERTHKVAMYLAEEIEKTGMFEIMNDGAQLPIVCYKLKENSNRGWNLYDLADRLLMKGWQVPAYPLPKNLENEIIQRLVIRADFGMNMAFNYVQDMQEAIDALNKAHILFHQEPENKTYGFTH.

N6-(pyridoxal phosphate)lysine is present on Lys277.

Belongs to the group II decarboxylase family. It depends on pyridoxal 5'-phosphate as a cofactor.

The enzyme catalyses L-glutamate + H(+) = 4-aminobutanoate + CO2. Functionally, converts internalized glutamate to GABA and increases the internal pH. Involved in glutamate-dependent acid resistance. The polypeptide is Glutamate decarboxylase (gadB) (Lactococcus lactis subsp. cremoris (strain MG1363)).